The primary structure comprises 1269 residues: Protein CFT1 (1269 aa).

The segment at 393 to 427 is disordered; sequence PESQPEETLDDGNESDDDLYGGDTAQTEDTTNRPL. A compositionally biased stretch (acidic residues) spans 395-412; it reads SQPEETLDDGNESDDDLY. Residues 416 to 425 show a composition bias toward polar residues; the sequence is TAQTEDTTNR.

The protein belongs to the CFT1 family.

The protein resides in the nucleus. In terms of biological role, RNA-binding component of the cleavage and polyadenylation factor (CPF) complex, which plays a key role in polyadenylation-dependent pre-mRNA 3'-end formation and cooperates with cleavage factors including the CFIA complex and NAB4/CFIB. Involved in poly(A) site recognition. May be involved in coupling transcription termination and mRNA 3'-end formation. This is Protein CFT1 (CFT1) from Yarrowia lipolytica (strain CLIB 122 / E 150) (Yeast).